The primary structure comprises 257 residues: Adenylate kinase (257 aa).

52-57 (GAGKGT) contacts ATP. An NMP region spans residues 72–101 (ATGDMLRSQVAKKTELGKEAKKIMDQGGLV). AMP-binding positions include T73, R78, 99–101 (GLV), 128–131 (GFPR), and Q135. Positions 169–206 (GRLVHPASGRSYHKIFNPPKNDMKDDVTGEPLIQRSDD) are LID. Residues R170 and 179-180 (SY) contribute to the ATP site. Residues R203 and R214 each coordinate AMP. Q242 lines the ATP pocket.

This sequence belongs to the adenylate kinase family. AK2 subfamily. In terms of assembly, monomer.

Its subcellular location is the cytoplasm. The protein resides in the cytosol. It localises to the mitochondrion intermembrane space. It carries out the reaction AMP + ATP = 2 ADP. Functionally, catalyzes the reversible transfer of the terminal phosphate group between ATP and AMP. Plays an important role in cellular energy homeostasis and in adenine nucleotide metabolism. Adenylate kinase activity is critical for regulation of the phosphate utilization and the AMP de novo biosynthesis pathways. This Aspergillus fumigatus (strain CBS 144.89 / FGSC A1163 / CEA10) (Neosartorya fumigata) protein is Adenylate kinase (adk1).